The sequence spans 588 residues: Adenine deaminase (588 aa).

Belongs to the metallo-dependent hydrolases superfamily. Adenine deaminase family. In terms of assembly, homodimer. It depends on Mn(2+) as a cofactor.

The enzyme catalyses adenine + H2O + H(+) = hypoxanthine + NH4(+). The protein is Adenine deaminase of Shigella flexneri serotype 5b (strain 8401).